The following is a 500-amino-acid chain: Probable cytosol aminopeptidase (500 aa).

2 residues coordinate Mn(2+): K265 and D270. Residue K277 is part of the active site. Mn(2+) is bound by residues D288, D347, and E349. R351 is a catalytic residue.

It belongs to the peptidase M17 family. Mn(2+) is required as a cofactor.

The protein localises to the cytoplasm. It carries out the reaction Release of an N-terminal amino acid, Xaa-|-Yaa-, in which Xaa is preferably Leu, but may be other amino acids including Pro although not Arg or Lys, and Yaa may be Pro. Amino acid amides and methyl esters are also readily hydrolyzed, but rates on arylamides are exceedingly low.. The catalysed reaction is Release of an N-terminal amino acid, preferentially leucine, but not glutamic or aspartic acids.. Its function is as follows. Presumably involved in the processing and regular turnover of intracellular proteins. Catalyzes the removal of unsubstituted N-terminal amino acids from various peptides. The chain is Probable cytosol aminopeptidase from Rickettsia africae (strain ESF-5).